Here is a 350-residue protein sequence, read N- to C-terminus: Neuronal-specific septin-3 (350 aa).

Positions 1-10 (MSKGLPEART) are enriched in basic and acidic residues. Positions 1–29 (MSKGLPEARTDAAMSELVPEPRPKPAVPM) are disordered. The Septin-type G domain occupies 58–331 (TGFDFNIMVV…ETYRAKRLND (274 aa)). Residues 68–75 (GQSGLGKS) form a G1 motif region. 68-75 (GQSGLGKS) lines the GTP pocket. At Ser91 the chain carries Phosphoserine. Position 102 (Thr102) interacts with GTP. The interval 125 to 128 (DTPG) is G3 motif. Residues 207 to 210 (AKAD) are G4 motif. GTP-binding positions include 208–216 (KADTMTLEE), Gly265, and Arg280. The disordered stretch occupies residues 328-350 (RLNDNGGLPPVSVDTEESHDSNP).

It belongs to the TRAFAC class TrmE-Era-EngA-EngB-Septin-like GTPase superfamily. Septin GTPase family. Septins polymerize into heterooligomeric protein complexes that form filaments, and can associate with cellular membranes, actin filaments and microtubules. GTPase activity is required for filament formation. Post-translationally, phosphorylated by PKG on serine residues. Phosphorylated by PKG on Ser-91. Expressed in the brain including the cerebrum, hippocampus and cerebellum (at protein level).

It localises to the cytoplasm. It is found in the cytoskeleton. The protein resides in the synapse. Filament-forming cytoskeletal GTPase. May play a role in cytokinesis (Potential). This Mus musculus (Mouse) protein is Neuronal-specific septin-3.